Reading from the N-terminus, the 375-residue chain is GDP-mannose-dependent alpha-mannosyltransferase (375 aa).

Belongs to the glycosyltransferase group 1 family. Glycosyltransferase 4 subfamily.

The protein operates within phospholipid metabolism; phosphatidylinositol metabolism. Its function is as follows. Catalyzes the addition of a mannose residue from GDP-D-mannose to GlcAGroAc2 to generate 1,2-di-O-C16/C18:1-(alpha-D-mannopyranosyl)-(1-4)-(alpha-D-glucopyranosyluronic acid)-(1-3)-glycerol(ManGlcAGroAc2). This is GDP-mannose-dependent alpha-mannosyltransferase (mgtA) from Mycolicibacterium smegmatis (strain ATCC 700084 / mc(2)155) (Mycobacterium smegmatis).